We begin with the raw amino-acid sequence, 280 residues long: Putative transcription factor kapC (280 aa).

Residues 1–102 (MQPALAPHPS…GKRPLSTSKR (102 aa)) are disordered. Over residues 39–49 (PQPPAPQPPHM) the composition is skewed to pro residues. The span at 79-89 (TQPDVTGQETP) shows a compositional bias: polar residues. In terms of domain architecture, bZIP spans 96-159 (PLSTSKRAAQ…EYIINLQSRL (64 aa)). The segment at 97-120 (LSTSKRAAQNRAAQRAFRQRKEAH) is basic motif. Positions 124–155 (LEGKVKAYENMGEAIKALQAENYQLREYIINL) are leucine-zipper. A disordered region spans residues 169–280 (LPGNIDLSQP…EQTHGLPLIS (112 aa)). Residues 197–211 (APPPTAPQQPQPPHA) are compositionally biased toward pro residues.

The protein belongs to the bZIP family.

The protein resides in the nucleus. In terms of biological role, putative transcription factor. This Neosartorya fischeri (strain ATCC 1020 / DSM 3700 / CBS 544.65 / FGSC A1164 / JCM 1740 / NRRL 181 / WB 181) (Aspergillus fischerianus) protein is Putative transcription factor kapC (kapC).